Here is a 238-residue protein sequence, read N- to C-terminus: Alpha-tubulin N-acetyltransferase (238 aa).

The N-acetyltransferase domain occupies 1–196 (MEFDFDISQS…NNFVVFEDLF (196 aa)). Acetyl-CoA-binding positions include 129–142 (FYVHESQQRTGNGK) and 165–174 (SFKFLSFLQK).

Belongs to the acetyltransferase ATAT1 family.

The enzyme catalyses L-lysyl-[alpha-tubulin] + acetyl-CoA = N(6)-acetyl-L-lysyl-[alpha-tubulin] + CoA + H(+). Specifically acetylates 'Lys-40' in alpha-tubulin on the lumenal side of microtubules. Promotes microtubule destabilization and accelerates microtubule dynamics; this activity may be independent of acetylation activity. Acetylates alpha-tubulin with a slow enzymatic rate, due to a catalytic site that is not optimized for acetyl transfer. Enters the microtubule through each end and diffuses quickly throughout the lumen of microtubules. Acetylates only long/old microtubules because of its slow acetylation rate since it does not have time to act on dynamically unstable microtubules before the enzyme is released. The chain is Alpha-tubulin N-acetyltransferase from Trichoplax adhaerens (Trichoplax reptans).